Consider the following 305-residue polypeptide: N-acetylmuramic acid 6-phosphate etherase (305 aa).

The interval 1 to 24 is disordered; it reads MTTPPSSPLSDPRRTEGVHPTHTD. Positions 11 to 24 are enriched in basic and acidic residues; sequence DPRRTEGVHPTHTD. The SIS domain occupies 62 to 225; that stretch reads ALPRLERGGR…SSALMVRLGK (164 aa). Catalysis depends on Glu-90, which acts as the Proton donor. Residue Glu-121 is part of the active site.

It belongs to the GCKR-like family. MurNAc-6-P etherase subfamily. In terms of assembly, homodimer.

It carries out the reaction N-acetyl-D-muramate 6-phosphate + H2O = N-acetyl-D-glucosamine 6-phosphate + (R)-lactate. The protein operates within amino-sugar metabolism; N-acetylmuramate degradation. Its function is as follows. Specifically catalyzes the cleavage of the D-lactyl ether substituent of MurNAc 6-phosphate, producing GlcNAc 6-phosphate and D-lactate. The polypeptide is N-acetylmuramic acid 6-phosphate etherase (Deinococcus geothermalis (strain DSM 11300 / CIP 105573 / AG-3a)).